The sequence spans 152 residues: Ribosome maturation factor RimP (152 aa).

It belongs to the RimP family.

Its subcellular location is the cytoplasm. In terms of biological role, required for maturation of 30S ribosomal subunits. This Burkholderia ambifaria (strain MC40-6) protein is Ribosome maturation factor RimP.